Consider the following 510-residue polypeptide: Serine carboxypeptidase-like 48 (510 aa).

The signal sequence occupies residues 1–25 (MDSKTTFLTFLLCIFIFSHFSPSTS). 3 disulfides stabilise this stretch: Cys141/Cys383, Cys309/Cys326, and Cys349/Cys354. Residues Asn158 and Asn159 are each glycosylated (N-linked (GlcNAc...) asparagine). Residue Ser231 is part of the active site. Catalysis depends on residues Asp421 and His478.

The protein belongs to the peptidase S10 family. Ubiquitous.

It localises to the secreted. Its function is as follows. Probable carboxypeptidase. The protein is Serine carboxypeptidase-like 48 (SCPL48) of Arabidopsis thaliana (Mouse-ear cress).